A 270-amino-acid polypeptide reads, in one-letter code: Small ribosomal subunit protein uS2 (270 aa).

It belongs to the universal ribosomal protein uS2 family. Component of the small ribosomal subunit. Mature ribosomes consist of a small (40S) and a large (60S) subunit. The 40S subunit contains about 33 different proteins and 1 molecule of RNA (18S). The 60S subunit contains about 49 different proteins and 3 molecules of RNA (28S, 5.8S and 5S). Interacts with oho23B/rpS21.

It is found in the cytoplasm. Its subcellular location is the nucleus. Its function is as follows. Required for the assembly and/or stability of the 40S ribosomal subunit. Required for the processing of the 20S rRNA-precursor to mature 18S rRNA in a late step of the maturation of 40S ribosomal subunits. Required during oogenesis and imaginal development. The chain is Small ribosomal subunit protein uS2 from Drosophila persimilis (Fruit fly).